Consider the following 257-residue polypeptide: Ribosome-inactivating protein charybdin (257 aa).

Glutamate 167 is an active-site residue. A disulfide bridge connects residues cysteine 217 and cysteine 254.

Belongs to the ribosome-inactivating protein family. Type 1 RIP subfamily.

It carries out the reaction Endohydrolysis of the N-glycosidic bond at one specific adenosine on the 28S rRNA.. Functionally, inhibits translation in rabbit reticulocytes. The protein is Ribosome-inactivating protein charybdin of Drimia maritima (Sea squill).